Reading from the N-terminus, the 184-residue chain is Peptide deformylase 2 (184 aa).

Residues Cys110 and His153 each contribute to the Fe cation site. Residue Glu154 is part of the active site. His157 serves as a coordination point for Fe cation.

This sequence belongs to the polypeptide deformylase family. Fe(2+) serves as cofactor.

The catalysed reaction is N-terminal N-formyl-L-methionyl-[peptide] + H2O = N-terminal L-methionyl-[peptide] + formate. In terms of biological role, removes the formyl group from the N-terminal Met of newly synthesized proteins. Requires at least a dipeptide for an efficient rate of reaction. N-terminal L-methionine is a prerequisite for activity but the enzyme has broad specificity at other positions. This chain is Peptide deformylase 2, found in Bacillus cereus (strain ATCC 14579 / DSM 31 / CCUG 7414 / JCM 2152 / NBRC 15305 / NCIMB 9373 / NCTC 2599 / NRRL B-3711).